The sequence spans 248 residues: Cytochrome c oxidase subunit 2 (248 aa).

Residues 1-36 are Mitochondrial intermembrane-facing; the sequence is MLFFNSILNDAPSSWALYFQDGASPSYLGVTHLNDY. A helical transmembrane segment spans residues 37–57; the sequence is LMFYLTFIFIGVIYAICKAVI. Residues 58 to 75 lie on the Mitochondrial matrix side of the membrane; sequence EYNYNSHPIAAKYTTHGS. A helical transmembrane segment spans residues 76-100; it reads IVEFIWTLIPALILILVALPSFKLL. The Mitochondrial intermembrane portion of the chain corresponds to 101–248; that stretch reads YLLDEVQKPS…DFLAWLEENS (148 aa). Cu cation is bound by residues H182, C217, E219, C221, H225, and M228. Residue E219 coordinates Mg(2+).

It belongs to the cytochrome c oxidase subunit 2 family. Component of the cytochrome c oxidase (complex IV, CIV), a multisubunit enzyme composed of a catalytic core of 3 subunits and several supernumerary subunits. The complex exists as a monomer or a dimer and forms supercomplexes (SCs) in the inner mitochondrial membrane with ubiquinol-cytochrome c oxidoreductase (cytochrome b-c1 complex, complex III, CIII). Cu cation serves as cofactor.

Its subcellular location is the mitochondrion inner membrane. The catalysed reaction is 4 Fe(II)-[cytochrome c] + O2 + 8 H(+)(in) = 4 Fe(III)-[cytochrome c] + 2 H2O + 4 H(+)(out). In terms of biological role, component of the cytochrome c oxidase, the last enzyme in the mitochondrial electron transport chain which drives oxidative phosphorylation. The respiratory chain contains 3 multisubunit complexes succinate dehydrogenase (complex II, CII), ubiquinol-cytochrome c oxidoreductase (cytochrome b-c1 complex, complex III, CIII) and cytochrome c oxidase (complex IV, CIV), that cooperate to transfer electrons derived from NADH and succinate to molecular oxygen, creating an electrochemical gradient over the inner membrane that drives transmembrane transport and the ATP synthase. Cytochrome c oxidase is the component of the respiratory chain that catalyzes the reduction of oxygen to water. Electrons originating from reduced cytochrome c in the intermembrane space (IMS) are transferred via the dinuclear copper A center (CU(A)) of subunit 2 and heme A of subunit 1 to the active site in subunit 1, a binuclear center (BNC) formed by heme A3 and copper B (CU(B)). The BNC reduces molecular oxygen to 2 water molecules using 4 electrons from cytochrome c in the IMS and 4 protons from the mitochondrial matrix. The sequence is that of Cytochrome c oxidase subunit 2 (cox2) from Schizosaccharomyces pombe (strain 972 / ATCC 24843) (Fission yeast).